The sequence spans 590 residues: Multidrug resistance-like ATP-binding protein MdlA (590 aa).

Residues 18 to 303 (YLGAVALLVI…LAWMFNIVER (286 aa)) form the ABC transmembrane type-1 domain. Helical transmembrane passes span 23–43 (ALLVIIAMLQLVPPKVVGIVV), 53–73 (TGQILMWIATMVLIAVVVYLL), 134–154 (GVLTLVDSLVMGCAVLIMMST), 155–175 (QISWQLTLFSLLPMPVMAIMI), 248–268 (IYIAIGMANLLAIGGGSWMVV), and 280–300 (FMMYLGLMIWPMLALAWMFNI). An ABC transporter domain is found at 337–570 (VNIHQFTYPQ…SGWYRDMYRY (234 aa)). 369–376 (GPTGSGKS) serves as a coordination point for ATP.

This sequence belongs to the ABC transporter superfamily. Drug exporter-2 (TC 3.A.1.117) family.

The protein localises to the cell inner membrane. The enzyme catalyses ATP + H2O + xenobioticSide 1 = ADP + phosphate + xenobioticSide 2.. The protein is Multidrug resistance-like ATP-binding protein MdlA (mdlA) of Escherichia coli (strain K12).